We begin with the raw amino-acid sequence, 466 residues long: Probable aminotransferase Rv3329 (466 aa).

Lys294 bears the N6-(pyridoxal phosphate)lysine mark.

The protein belongs to the class-III pyridoxal-phosphate-dependent aminotransferase family. Requires pyridoxal 5'-phosphate as cofactor.

Probable aminotransferase. In Mycobacterium tuberculosis (strain ATCC 25618 / H37Rv), this protein is Probable aminotransferase Rv3329.